Consider the following 821-residue polypeptide: DNA replication licensing factor MCM6 (821 aa).

Met-1 carries the N-acetylmethionine modification. Ser-13, Ser-219, and Ser-271 each carry phosphoserine. The residue at position 278 (Thr-278) is a Phosphothreonine. Residues 346–553 (LYHNLCTSLF…TDYAIARRIV (208 aa)) enclose the MCM domain. Residues His-359, Ser-399, Thr-400, Ala-401, Lys-402, Ser-403, and Asn-504 each contribute to the ATP site. Residues 528–531 (SRFD) carry the Arginine finger motif. Residues Arg-619 and Glu-622 each contribute to the ADP site. The residue at position 643 (Lys-643) is an N6-acetyllysine. The tract at residues 676–708 (TDEGQGGVNGHADSPAPVNRFNGSSEDASQETV) is disordered. 3 positions are modified to phosphoserine: Ser-689, Ser-704, and Ser-762. The span at 696–708 (FNGSSEDASQETV) shows a compositional bias: polar residues. Phosphothreonine is present on Thr-791.

Belongs to the MCM family. In terms of assembly, component of the MCM2-7 complex. The complex forms a toroidal hexameric ring with the proposed subunit order MCM2-MCM6-MCM4-MCM7-MCM3-MCM5. Component of the CMG helicase complex, a hexameric ring of related MCM2-7 subunits stabilized by CDC45 and the tetrameric GINS complex. May interact with MCM10. Interacts with TIPIN. Interacts with CDT1. Interacts with MCMBP. Interacts with DDI2. O-glycosylated (O-GlcNAcylated), in a cell cycle-dependent manner.

It is found in the nucleus. The protein localises to the chromosome. The enzyme catalyses ATP + H2O = ADP + phosphate + H(+). Functionally, acts as a component of the MCM2-7 complex (MCM complex) which is the replicative helicase essential for 'once per cell cycle' DNA replication initiation and elongation in eukaryotic cells. Core component of CDC45-MCM-GINS (CMG) helicase, the molecular machine that unwinds template DNA during replication, and around which the replisome is built. The active ATPase sites in the MCM2-7 ring are formed through the interaction surfaces of two neighboring subunits such that a critical structure of a conserved arginine finger motif is provided in trans relative to the ATP-binding site of the Walker A box of the adjacent subunit. The six ATPase active sites, however, are likely to contribute differentially to the complex helicase activity. This Mus musculus (Mouse) protein is DNA replication licensing factor MCM6 (Mcm6).